The primary structure comprises 271 residues: MSLENIINEAFENRAQISPGTVGAEVREAVAEALRLLDSGAARVAEKKDGGWVVNQWLKKAVLLSFRINDNRVMDGGETRYFDKVEPKFGGFGPEEFRAAGVRVVPPAAVRRGAYIAPGVILMPSYVNIGAYVDSGTMVDTWATVGSCAQIGKNVHLSGGVGIGGVLEPLQAGPTIIEDNCFIGARSEIVEGVIVEEGSVISMGVYIGQSTKIYNRMTGEISYGRVPAGSVVVSGNLPARDGSHSLYCAVIIKQVDEKTRGKVGINELLRD.

Substrate-binding residues include R103 and D140.

This sequence belongs to the transferase hexapeptide repeat family. Homotrimer.

It is found in the cytoplasm. It catalyses the reaction (S)-2,3,4,5-tetrahydrodipicolinate + succinyl-CoA + H2O = (S)-2-succinylamino-6-oxoheptanedioate + CoA. The protein operates within amino-acid biosynthesis; L-lysine biosynthesis via DAP pathway; LL-2,6-diaminopimelate from (S)-tetrahydrodipicolinate (succinylase route): step 1/3. In Methylococcus capsulatus (strain ATCC 33009 / NCIMB 11132 / Bath), this protein is 2,3,4,5-tetrahydropyridine-2,6-dicarboxylate N-succinyltransferase.